Consider the following 443-residue polypeptide: Ribulose bisphosphate carboxylase large chain (443 aa).

K7 carries the post-translational modification N6,N6,N6-trimethyllysine. 2 residues coordinate substrate: N116 and T166. The Proton acceptor role is filled by K168. A substrate-binding site is contributed by K170. Residues K194, D196, and E197 each contribute to the Mg(2+) site. Position 194 is an N6-carboxylysine (K194). H287 (proton acceptor) is an active-site residue. Positions 288, 320, and 372 each coordinate substrate.

Belongs to the RuBisCO large chain family. Type I subfamily. Heterohexadecamer of 8 large chains and 8 small chains; disulfide-linked. The disulfide link is formed within the large subunit homodimers. Mg(2+) is required as a cofactor. In terms of processing, the disulfide bond which can form in the large chain dimeric partners within the hexadecamer appears to be associated with oxidative stress and protein turnover.

Its subcellular location is the plastid. It localises to the chloroplast. The enzyme catalyses 2 (2R)-3-phosphoglycerate + 2 H(+) = D-ribulose 1,5-bisphosphate + CO2 + H2O. It catalyses the reaction D-ribulose 1,5-bisphosphate + O2 = 2-phosphoglycolate + (2R)-3-phosphoglycerate + 2 H(+). RuBisCO catalyzes two reactions: the carboxylation of D-ribulose 1,5-bisphosphate, the primary event in carbon dioxide fixation, as well as the oxidative fragmentation of the pentose substrate in the photorespiration process. Both reactions occur simultaneously and in competition at the same active site. This chain is Ribulose bisphosphate carboxylase large chain, found in Abies sachalinensis (Sakhalin fir).